Here is a 326-residue protein sequence, read N- to C-terminus: Pyruvate dehydrogenase E1 component subunit alpha (326 aa).

Heterodimer of an alpha and a beta chain. Requires thiamine diphosphate as cofactor.

It catalyses the reaction N(6)-[(R)-lipoyl]-L-lysyl-[protein] + pyruvate + H(+) = N(6)-[(R)-S(8)-acetyldihydrolipoyl]-L-lysyl-[protein] + CO2. In terms of biological role, the pyruvate dehydrogenase complex catalyzes the overall conversion of pyruvate to acetyl-CoA and CO(2). It contains multiple copies of three enzymatic components: pyruvate dehydrogenase (E1), dihydrolipoamide acetyltransferase (E2) and lipoamide dehydrogenase (E3). This chain is Pyruvate dehydrogenase E1 component subunit alpha (pdhA), found in Rickettsia bellii (strain RML369-C).